A 488-amino-acid chain; its full sequence is GTPase Der (488 aa).

EngA-type G domains follow at residues 3–166 (PVVA…AEAM) and 199–372 (IKLA…DSAT). GTP-binding positions include 9-16 (GRPNVGKS), 56-60 (DTGGI), 118-121 (NKID), 205-212 (GKPNVGKS), 252-256 (DTAGV), and 317-320 (NKWD). One can recognise a KH-like domain in the interval 373–457 (RRVSTSMLTR…PIQLRFQEGD (85 aa)).

This sequence belongs to the TRAFAC class TrmE-Era-EngA-EngB-Septin-like GTPase superfamily. EngA (Der) GTPase family. Associates with the 50S ribosomal subunit.

GTPase that plays an essential role in the late steps of ribosome biogenesis. The polypeptide is GTPase Der (Shewanella sp. (strain MR-7)).